We begin with the raw amino-acid sequence, 82 residues long: Sec-independent protein translocase protein TatA (82 aa).

Residues 1 to 21 (MGIFDWKHWIVILIVVVLVFG) form a helical membrane-spanning segment. The interval 43 to 82 (VNTEEDDKKDQPAAQPAQPLNQPHTIDAQAQKVEEPARKD) is disordered.

Belongs to the TatA/E family. As to quaternary structure, the Tat system comprises two distinct complexes: a TatABC complex, containing multiple copies of TatA, TatB and TatC subunits, and a separate TatA complex, containing only TatA subunits. Substrates initially bind to the TatABC complex, which probably triggers association of the separate TatA complex to form the active translocon.

It is found in the cell inner membrane. Part of the twin-arginine translocation (Tat) system that transports large folded proteins containing a characteristic twin-arginine motif in their signal peptide across membranes. TatA could form the protein-conducting channel of the Tat system. The chain is Sec-independent protein translocase protein TatA from Pseudomonas aeruginosa (strain LESB58).